The following is a 351-amino-acid chain: Molybdenum import ATP-binding protein ModC (351 aa).

One can recognise an ABC transporter domain in the interval 1–229 (MLQINVKKQL…PIFAPWKGES (229 aa)). Residue 31-38 (GLSGSGKT) coordinates ATP. Residues 289–351 (QTSIRNILRG…YVQIKAVSVM (63 aa)) enclose the Mop domain.

Belongs to the ABC transporter superfamily. Molybdate importer (TC 3.A.1.8) family. In terms of assembly, the complex is composed of two ATP-binding proteins (ModC), two transmembrane proteins (ModB) and a solute-binding protein (ModA).

It localises to the cell inner membrane. It carries out the reaction molybdate(out) + ATP + H2O = molybdate(in) + ADP + phosphate + H(+). Part of the ABC transporter complex ModABC involved in molybdenum import. Responsible for energy coupling to the transport system. This is Molybdenum import ATP-binding protein ModC from Haemophilus influenzae (strain ATCC 51907 / DSM 11121 / KW20 / Rd).